We begin with the raw amino-acid sequence, 591 residues long: V-type ATP synthase alpha chain (591 aa).

232-239 (GPFGAGKT) lines the ATP pocket.

The protein belongs to the ATPase alpha/beta chains family.

It carries out the reaction ATP + H2O + 4 H(+)(in) = ADP + phosphate + 5 H(+)(out). Its function is as follows. Produces ATP from ADP in the presence of a proton gradient across the membrane. The V-type alpha chain is a catalytic subunit. The protein is V-type ATP synthase alpha chain of Clostridium perfringens (strain ATCC 13124 / DSM 756 / JCM 1290 / NCIMB 6125 / NCTC 8237 / Type A).